The primary structure comprises 273 residues: Undecaprenyl-diphosphatase (273 aa).

The next 7 helical transmembrane spans lie at 6–26 (SLLI…LPVS), 45–65 (AKTF…VMFW), 90–110 (LTLI…LLFH), 116–136 (LFNP…LIAA), 190–210 (YAAS…ATAL), 222–242 (GDIP…LIAI), and 252–272 (ISFI…YVVF).

The protein belongs to the UppP family.

The protein localises to the cell inner membrane. It carries out the reaction di-trans,octa-cis-undecaprenyl diphosphate + H2O = di-trans,octa-cis-undecaprenyl phosphate + phosphate + H(+). Its function is as follows. Catalyzes the dephosphorylation of undecaprenyl diphosphate (UPP). Confers resistance to bacitracin. This is Undecaprenyl-diphosphatase from Escherichia coli O139:H28 (strain E24377A / ETEC).